A 677-amino-acid polypeptide reads, in one-letter code: DNA ligase (677 aa).

Residues 35 to 39, 84 to 85, and Glu-116 each bind NAD(+); these read DAEYD and SL. Catalysis depends on Lys-118, which acts as the N6-AMP-lysine intermediate. NAD(+) is bound by residues Arg-139, Glu-176, Lys-295, and Lys-319. Residues Cys-413, Cys-416, Cys-431, and Cys-437 each coordinate Zn(2+). One can recognise a BRCT domain in the interval 596–677; the sequence is LDELPLAGQV…MLAMFADLEG (82 aa).

The protein belongs to the NAD-dependent DNA ligase family. LigA subfamily. It depends on Mg(2+) as a cofactor. The cofactor is Mn(2+).

The enzyme catalyses NAD(+) + (deoxyribonucleotide)n-3'-hydroxyl + 5'-phospho-(deoxyribonucleotide)m = (deoxyribonucleotide)n+m + AMP + beta-nicotinamide D-nucleotide.. Functionally, DNA ligase that catalyzes the formation of phosphodiester linkages between 5'-phosphoryl and 3'-hydroxyl groups in double-stranded DNA using NAD as a coenzyme and as the energy source for the reaction. It is essential for DNA replication and repair of damaged DNA. The protein is DNA ligase of Pseudoalteromonas atlantica (strain T6c / ATCC BAA-1087).